The following is a 480-amino-acid chain: PTS system sucrose-specific EIIBC component (480 aa).

A PTS EIIB type-1 domain is found at K4–S87. The active-site Phosphocysteine intermediate; for EIIB activity is C26. 8 helical membrane-spanning segments follow: residues L109–I129, M158–A178, F182–M202, L264–P284, F303–G323, P349–I369, P405–V425, and L449–L469. The PTS EIIC type-1 domain occupies I120–A480.

Its subcellular location is the cell membrane. It carries out the reaction N(pros)-phospho-L-histidyl-[protein](out) + sucrose = sucrose 6(G)-phosphate(in) + L-histidyl-[protein]. The phosphoenolpyruvate-dependent sugar phosphotransferase system (sugar PTS), a major carbohydrate active transport system, catalyzes the phosphorylation of incoming sugar substrates concomitantly with their translocation across the cell membrane. This system is involved in sucrose transport. In Staphylococcus xylosus, this protein is PTS system sucrose-specific EIIBC component.